We begin with the raw amino-acid sequence, 138 residues long: Flagellar basal body rod protein FlgB (138 aa).

It belongs to the flagella basal body rod proteins family. In terms of assembly, the basal body constitutes a major portion of the flagellar organelle and consists of a number of rings mounted on a central rod. In Gram-negative bacteria, at least four rings, L, P, S and M are present, whereas Gram-positive bacteria lack the L and P rings. The rod consists of about 26 subunits of FlgG in the distal portion, and FlgB, FlgC and FlgF build up the proximal portion of the rod with about 6 subunits each. Rod assembly occurs by export via the flagellum-specific pathway of its constituent proteins and by their incorporation into the rod structure in the probable order of FlgB, FlgC, FlgF and FlgG. Another protein, FliE, also assembles onto the stable rod structure. Interacts with FliE and peptidoglycan hydrolase FlgJ (via N-terminus), which seems to function as a scaffold or cap for rod assembly.

The protein localises to the bacterial flagellum basal body. Structural component of flagellum, the bacterial motility apparatus. Part of the rod structure of flagellar basal body. This Salmonella typhimurium (strain LT2 / SGSC1412 / ATCC 700720) protein is Flagellar basal body rod protein FlgB (flgB).